A 179-amino-acid chain; its full sequence is Inner membrane-spanning protein YciB (179 aa).

5 helical membrane passes run 3-23 (FLFD…FGIY), 49-69 (PMQW…ILLH), 76-96 (WKPT…VIGW), 121-141 (VAWA…AYQF), and 149-169 (FKLF…SIWL).

It belongs to the YciB family.

The protein resides in the cell inner membrane. Its function is as follows. Plays a role in cell envelope biogenesis, maintenance of cell envelope integrity and membrane homeostasis. This is Inner membrane-spanning protein YciB from Cupriavidus metallidurans (strain ATCC 43123 / DSM 2839 / NBRC 102507 / CH34) (Ralstonia metallidurans).